Reading from the N-terminus, the 302-residue chain is Sulfate adenylyltransferase subunit 2 (302 aa).

Belongs to the PAPS reductase family. CysD subfamily. In terms of assembly, heterodimer composed of CysD, the smaller subunit, and CysN.

The enzyme catalyses sulfate + ATP + H(+) = adenosine 5'-phosphosulfate + diphosphate. It functions in the pathway sulfur metabolism; hydrogen sulfide biosynthesis; sulfite from sulfate: step 1/3. Its function is as follows. With CysN forms the ATP sulfurylase (ATPS) that catalyzes the adenylation of sulfate producing adenosine 5'-phosphosulfate (APS) and diphosphate, the first enzymatic step in sulfur assimilation pathway. APS synthesis involves the formation of a high-energy phosphoric-sulfuric acid anhydride bond driven by GTP hydrolysis by CysN coupled to ATP hydrolysis by CysD. The sequence is that of Sulfate adenylyltransferase subunit 2 from Klebsiella pneumoniae (strain 342).